The sequence spans 679 residues: Stress-70 protein, mitochondrial (679 aa).

The N-terminal 46 residues, 1 to 46 (MISASRAAAARLVGTAASRSPAAARPQDGWNGLSHEAFRFVSRRDY), are a transit peptide targeting the mitochondrion. Residues 1–432 (MISASRAAAA…IQGGVLAGDV (432 aa)) form an interaction with NFS1 region. The ADP site is built by Thr-63 and Asn-64. The tract at residues 63 to 431 (TNSCVAVMEG…AIQGGVLAGD (369 aa)) is nucleotide-binding domain (NBD). An N6-acetyllysine modification is found at Lys-76. Thr-87 carries the phosphothreonine modification. Lys-135 and Lys-138 each carry N6-acetyllysine; alternate. N6-succinyllysine; alternate occurs at positions 135 and 138. Lys-143 is modified (N6-acetyllysine). Lys-206 bears the N6-acetyllysine; alternate mark. Residue Lys-206 is modified to N6-succinyllysine; alternate. Lys-206 carries the post-translational modification N6-malonyllysine; alternate. Residues Lys-234 and Lys-288 each carry the N6-acetyllysine modification. Lys-300 carries the post-translational modification N6-acetyllysine; alternate. An N6-succinyllysine; alternate modification is found at Lys-300. ADP is bound by residues Glu-313, Lys-316, and Ser-320. The residue at position 360 (Lys-360) is an N6-acetyllysine; alternate. Lys-360 is subject to N6-succinyllysine; alternate. The residue at position 368 (Lys-368) is an N6-succinyllysine. The ADP site is built by Gly-388 and Arg-391. Lys-394 carries the N6-succinyllysine modification. Ser-408 is subject to Phosphoserine. Residues 432–441 (VTDVLLLDVT) are interdomain linker. The interval 432–679 (VTDVLLLDVT…QKEDQKEEKQ (248 aa)) is interaction with FXN and ISCU. Positions 442–679 (PLSLGIETLG…QKEDQKEEKQ (238 aa)) are substrate-binding domain (SBD). Omega-N-methylarginine is present on Arg-513. N6-acetyllysine; alternate occurs at positions 567 and 600. N6-succinyllysine; alternate occurs at positions 567 and 600. Residue Lys-610 is modified to N6-succinyllysine. An N6-acetyllysine modification is found at Lys-612. An N6-acetyllysine; alternate modification is found at Lys-646. Lys-646 is modified (N6-succinyllysine; alternate). The tract at residues 656–679 (ASEREGSGSSGTGEQKEDQKEEKQ) is disordered. Basic and acidic residues predominate over residues 669–679 (EQKEDQKEEKQ).

Belongs to the heat shock protein 70 family. In terms of assembly, interacts strongly with the intermediate form of FXN and weakly with its mature form. Interacts with HSCB. Associates with the mitochondrial contact site and cristae organizing system (MICOS) complex, composed of at least MICOS10/MIC10, CHCHD3/MIC19, CHCHD6/MIC25, APOOL/MIC27, IMMT/MIC60, APOO/MIC23/MIC26 and QIL1/MIC13. This complex was also known under the names MINOS or MitOS complex. The MICOS complex associates with mitochondrial outer membrane proteins SAMM50, MTX1, MTX2 and DNAJC11, mitochondrial inner membrane protein TMEM11 and with HSPA9. Interacts with DNLZ, the interaction is required to prevent self-aggregation. Interacts with TESPA1. Interacts with PDPN. Interacts with NFU1, NFS1 and ISCU. Interacts with TP53; the interaction promotes TP53 degradation. Interacts (via SBD domain) with UBXN2A; the interaction with UBXN2A inhibits HSPA9/MOT-2 interaction with and degradation of TP53, thereby promotes TP53 translocation to the nucleus. Interacts with ITPR1 AND VDAC1; this interaction couples ITPR1 to VDAC1. Component of the TIM23 mitochondrial inner membrane pre-sequence translocase complex.

Its subcellular location is the mitochondrion. The protein resides in the nucleus. It is found in the nucleolus. The protein localises to the cytoplasm. It localises to the mitochondrion matrix. It catalyses the reaction ATP + H2O = ADP + phosphate + H(+). With respect to regulation, the chaperone activity is regulated by ATP-induced allosteric coupling of the nucleotide-binding (NBD) and substrate-binding (SBD) domains. ATP binding in the NBD leads to a conformational change in the NBD, which is transferred through the interdomain linker (IDL) to the substrate-binding domain (SBD). This elicits a reduced substrate affinity and a faster substrate exchange rate. Upon hydrolysis of ATP to ADP, the protein undergoes a conformational change that increases its affinity for substrate proteins. It cycles through repeated phases of ATP hydrolysis and nucleotide exchange, facilitating repeated cycles of substrate binding and release. Functions in collaboration with co-chaperones. Functions with the co-chaperone, DNLZ, to maintain solubility and regulate ATP hydrolysis. Nucleotide exchange factors, GRPEL1 and GRPEL2, accelerate nucleotide exchange. Functionally, mitochondrial chaperone that plays a key role in mitochondrial protein import, folding, and assembly. Plays an essential role in the protein quality control system, the correct folding of proteins, the re-folding of misfolded proteins, and the targeting of proteins for subsequent degradation. These processes are achieved through cycles of ATP binding, ATP hydrolysis, and ADP release, mediated by co-chaperones. In mitochondria, it associates with the TIM (translocase of the inner membrane) protein complex to assist in the import and folding of mitochondrial proteins. Plays an important role in mitochondrial iron-sulfur cluster (ISC) biogenesis. Interacts with and stabilizes ISC cluster assembly proteins FXN, NFU1, NFS1 and ISCU. Regulates erythropoiesis via stabilization of ISC assembly. Regulates mitochondrial calcium-dependent apoptosis by coupling two calcium channels, ITPR1 and VDAC1, at the mitochondria-associated endoplasmic reticulum (ER) membrane to facilitate calcium transport from the ER lumen to the mitochondria intermembrane space, providing calcium for the downstream calcium channel MCU, which releases it into the mitochondrial matrix. Although primarily located in the mitochondria, it is also found in other cellular compartments. In the cytosol, it associates with proteins involved in signaling, apoptosis, or senescence. It may play a role in cell cycle regulation via its interaction with and promotion of degradation of TP53. May play a role in the control of cell proliferation and cellular aging. Protects against reactive oxygen species (ROS). Extracellular HSPA9 plays a cytoprotective role by preventing cell lysis following immune attack by the membrane attack complex by disrupting formation of the complex. The protein is Stress-70 protein, mitochondrial of Mus musculus (Mouse).